The primary structure comprises 289 residues: Elongation factor Ts (289 aa).

Positions 82 to 85 (TDFL) are involved in Mg(2+) ion dislocation from EF-Tu.

It belongs to the EF-Ts family.

It is found in the cytoplasm. Its function is as follows. Associates with the EF-Tu.GDP complex and induces the exchange of GDP to GTP. It remains bound to the aminoacyl-tRNA.EF-Tu.GTP complex up to the GTP hydrolysis stage on the ribosome. The protein is Elongation factor Ts of Azotobacter vinelandii (strain DJ / ATCC BAA-1303).